Consider the following 124-residue polypeptide: Ribonuclease pancreatic (124 aa).

The span at 1-13 shows a compositional bias: basic and acidic residues; sequence KESAAAKFERQHM. The interval 1-24 is disordered; it reads KESAAAKFERQHMDSSTSSASSSN. 2 residues coordinate substrate: lysine 7 and arginine 10. Histidine 12 acts as the Proton acceptor in catalysis. 4 cysteine pairs are disulfide-bonded: cysteine 26–cysteine 84, cysteine 40–cysteine 95, cysteine 58–cysteine 110, and cysteine 65–cysteine 72. N-linked (GlcNAc...) asparagine; partial glycosylation is present at asparagine 34. Residues 41–45, lysine 66, and arginine 85 contribute to the substrate site; that span reads KPVNT. Histidine 119 functions as the Proton donor in the catalytic mechanism.

Belongs to the pancreatic ribonuclease family. Monomer. Interacts with and forms tight 1:1 complexes with RNH1. Dimerization of two such complexes may occur. Interaction with RNH1 inhibits this protein. Pancreas.

It localises to the secreted. It carries out the reaction an [RNA] containing cytidine + H2O = an [RNA]-3'-cytidine-3'-phosphate + a 5'-hydroxy-ribonucleotide-3'-[RNA].. The enzyme catalyses an [RNA] containing uridine + H2O = an [RNA]-3'-uridine-3'-phosphate + a 5'-hydroxy-ribonucleotide-3'-[RNA].. Functionally, endonuclease that catalyzes the cleavage of RNA on the 3' side of pyrimidine nucleotides. Acts on single-stranded and double-stranded RNA. This chain is Ribonuclease pancreatic (RNASE1), found in Ovis aries (Sheep).